The following is a 318-amino-acid chain: UDP-3-O-acylglucosamine N-acyltransferase (318 aa).

The active-site Proton acceptor is His230.

Belongs to the transferase hexapeptide repeat family. LpxD subfamily. As to quaternary structure, homotrimer.

The enzyme catalyses a UDP-3-O-[(3R)-3-hydroxyacyl]-alpha-D-glucosamine + a (3R)-hydroxyacyl-[ACP] = a UDP-2-N,3-O-bis[(3R)-3-hydroxyacyl]-alpha-D-glucosamine + holo-[ACP] + H(+). It functions in the pathway bacterial outer membrane biogenesis; LPS lipid A biosynthesis. In terms of biological role, catalyzes the N-acylation of UDP-3-O-acylglucosamine using 3-hydroxyacyl-ACP as the acyl donor. Is involved in the biosynthesis of lipid A, a phosphorylated glycolipid that anchors the lipopolysaccharide to the outer membrane of the cell. The protein is UDP-3-O-acylglucosamine N-acyltransferase of Wolinella succinogenes (strain ATCC 29543 / DSM 1740 / CCUG 13145 / JCM 31913 / LMG 7466 / NCTC 11488 / FDC 602W) (Vibrio succinogenes).